The following is a 538-amino-acid chain: Putative cysteine ligase BshC (538 aa).

Residues 460 to 484 (KINEQIELLERMLKRNVEKKHEVEL) adopt a coiled-coil conformation.

The protein belongs to the BshC family.

Involved in bacillithiol (BSH) biosynthesis. May catalyze the last step of the pathway, the addition of cysteine to glucosamine malate (GlcN-Mal) to generate BSH. The polypeptide is Putative cysteine ligase BshC (Bacillus thuringiensis (strain Al Hakam)).